Consider the following 272-residue polypeptide: 2-succinyl-6-hydroxy-2,4-cyclohexadiene-1-carboxylate synthase (272 aa).

The protein belongs to the AB hydrolase superfamily. MenH family. As to quaternary structure, monomer.

The enzyme catalyses 5-enolpyruvoyl-6-hydroxy-2-succinyl-cyclohex-3-ene-1-carboxylate = (1R,6R)-6-hydroxy-2-succinyl-cyclohexa-2,4-diene-1-carboxylate + pyruvate. The protein operates within quinol/quinone metabolism; 1,4-dihydroxy-2-naphthoate biosynthesis; 1,4-dihydroxy-2-naphthoate from chorismate: step 3/7. It functions in the pathway quinol/quinone metabolism; menaquinone biosynthesis. In terms of biological role, catalyzes a proton abstraction reaction that results in 2,5-elimination of pyruvate from 2-succinyl-5-enolpyruvyl-6-hydroxy-3-cyclohexene-1-carboxylate (SEPHCHC) and the formation of 2-succinyl-6-hydroxy-2,4-cyclohexadiene-1-carboxylate (SHCHC). The chain is 2-succinyl-6-hydroxy-2,4-cyclohexadiene-1-carboxylate synthase from Yersinia pestis bv. Antiqua (strain Nepal516).